We begin with the raw amino-acid sequence, 218 residues long: Serine/threonine-protein phosphatase 1 (218 aa).

Residues aspartate 24, histidine 26, aspartate 53, and asparagine 79 each contribute to the Mn(2+) site. The active-site Proton donor is histidine 80. Histidine 187 serves as a coordination point for Mn(2+).

It belongs to the PPP phosphatase family. PP-1 subfamily. Mn(2+) is required as a cofactor.

The catalysed reaction is O-phospho-L-seryl-[protein] + H2O = L-seryl-[protein] + phosphate. It carries out the reaction O-phospho-L-threonyl-[protein] + H2O = L-threonyl-[protein] + phosphate. In terms of biological role, plays a key role in signaling protein misfolding via the CpxR/CPXA transducing system. It also modulates the phosphorylated status of many phosphoproteins in E.coli, some of which acting as major chaperones. Has been shown, in vitro, to act on Ser, Thr and Tyr-phosphorylated substrates. This is Serine/threonine-protein phosphatase 1 (pphA) from Escherichia coli (strain K12).